The chain runs to 39 residues: B melanoma antigen 4 (39 aa).

An N-terminal signal peptide occupies residues 1–17; that stretch reads MAAGAVFLALSAQLLQA.

The protein belongs to the BAGE family. As to expression, not expressed in normal tissues except in testis. Expressed in melanoma, bladder and lung carcinomas.

The protein localises to the secreted. Its function is as follows. Unknown. Candidate gene encoding tumor antigens. This chain is B melanoma antigen 4 (BAGE4), found in Homo sapiens (Human).